The following is a 292-amino-acid chain: ATP synthase gamma chain (292 aa).

It belongs to the ATPase gamma chain family. As to quaternary structure, F-type ATPases have 2 components, CF(1) - the catalytic core - and CF(0) - the membrane proton channel. CF(1) has five subunits: alpha(3), beta(3), gamma(1), delta(1), epsilon(1). CF(0) has three main subunits: a, b and c.

Its subcellular location is the cell membrane. Functionally, produces ATP from ADP in the presence of a proton gradient across the membrane. The gamma chain is believed to be important in regulating ATPase activity and the flow of protons through the CF(0) complex. This is ATP synthase gamma chain from Caldicellulosiruptor saccharolyticus (strain ATCC 43494 / DSM 8903 / Tp8T 6331).